Reading from the N-terminus, the 224-residue chain is Putative adhesin RF_1314 (224 aa).

The N-terminal stretch at 1–22 (MKKLLLIAATSATILSSSISFA) is a signal peptide.

This Rickettsia felis (strain ATCC VR-1525 / URRWXCal2) (Rickettsia azadi) protein is Putative adhesin RF_1314.